Here is a 309-residue protein sequence, read N- to C-terminus: Calponin-2 (309 aa).

Ser-2 is modified (N-acetylserine). An N6-acetyllysine mark is found at Lys-8 and Lys-25. The Calponin-homology (CH) domain occupies 28–132 (PQKEAELRSW…SLLALAGKAK (105 aa)). A Phosphoserine modification is found at Ser-138. Calponin-like repeat units lie at residues 166-191 (IGLQ…RHLY), 206-231 (ISLQ…RHIY), and 245-269 (MSLQ…RQIY). The interval 273-309 (YCPQGPAADGAPAAAGDGPGPGEPSECPPYYQEEAGY) is disordered. Residues 277–288 (GPAADGAPAAAG) show a composition bias toward low complexity.

Belongs to the calponin family.

Its function is as follows. Thin filament-associated protein that is implicated in the regulation and modulation of smooth muscle contraction. It is capable of binding to actin, calmodulin and tropomyosin. The interaction of calponin with actin inhibits the actomyosin Mg-ATPase activity. The sequence is that of Calponin-2 (CNN2) from Bos taurus (Bovine).